We begin with the raw amino-acid sequence, 133 residues long: MATNRRVSRVAELIKREVSQMLINGIKDDRVGTGMVSVTDVDVSGDLQHAKIYVSIYGTEEAKAETMAGLKSATGFVRSELGARVRLRRTPEVTFIEDRSIERGTKVLTLLNKLENARSPDDIPSADDSLDED.

It belongs to the RbfA family. As to quaternary structure, monomer. Binds 30S ribosomal subunits, but not 50S ribosomal subunits or 70S ribosomes.

The protein localises to the cytoplasm. In terms of biological role, one of several proteins that assist in the late maturation steps of the functional core of the 30S ribosomal subunit. Associates with free 30S ribosomal subunits (but not with 30S subunits that are part of 70S ribosomes or polysomes). Required for efficient processing of 16S rRNA. May interact with the 5'-terminal helix region of 16S rRNA. This is Ribosome-binding factor A from Nostoc sp. (strain PCC 7120 / SAG 25.82 / UTEX 2576).